Consider the following 1083-residue polypeptide: UPF0182 protein BAD_0641 (1083 aa).

The segment at 1-72 is disordered; that stretch reads MSFFDMFGPM…TSKPNRPRKP (72 aa). 7 helical membrane-spanning segments follow: residues 78 to 98, 125 to 145, 178 to 198, 239 to 259, 281 to 301, 325 to 345, and 372 to 392; these read IFIGVVLALAIVIGLFFALAQ, LWLAYAVLIAAVGFISATLAI, IAVVISLIVGLVFGSQFNANW, SLLLLAGIIFSIVTHVLMGGI, IGIWLMLNMFAWAANQVLGVF, VTFIMAAITAILGVILGLWIM, and VAIASAIVVSLVLTVAWPVLL. Residues 976-1061 form a disordered region; sequence DSGASAGDAE…SDAAMKKGDW (86 aa). 2 stretches are compositionally biased toward basic and acidic residues: residues 991–1013 and 1050–1060; these read TDDKQDAKNDDSADGKTNTDGKQ and KDSDAAMKKGD.

This sequence belongs to the UPF0182 family.

It localises to the cell membrane. The chain is UPF0182 protein BAD_0641 from Bifidobacterium adolescentis (strain ATCC 15703 / DSM 20083 / NCTC 11814 / E194a).